Here is a 440-residue protein sequence, read N- to C-terminus: Probable circularly permuted 1,3-beta-glucanase (440 aa).

A signal peptide spans 1 to 20; it reads MHYSLFFGAALAASVSTVSA. The segment covering 100–112 has biased composition (basic and acidic residues); that stretch reads GEKPKRELKPSIH. Disordered regions lie at residues 100 to 126 and 153 to 195; these read GEKP…FHEK and PAAP…VAPG. Residues 113–125 show a composition bias toward basic residues; it reads ERRHGHSHQRFHE. A compositionally biased stretch (low complexity) spans 153 to 164; it reads PAAPTSAPGAPG. Residues 177–186 show a composition bias toward basic and acidic residues; that stretch reads GGDKPKDPKP. Positions 350–355 match the ExDxxE motif motif; that stretch reads EFDVLE.

This sequence belongs to the PGA52 family.

It is found in the secreted. It catalyses the reaction Hydrolysis of (1-&gt;3)-beta-D-glucosidic linkages in (1-&gt;3)-beta-D-glucans.. Its function is as follows. Probable circularly permuted 1,3-beta-glucanase involved in cell wall modification through beta-1,3-glucan network alterations such as increased branching or remodeling. In Arthroderma benhamiae (strain ATCC MYA-4681 / CBS 112371) (Trichophyton mentagrophytes), this protein is Probable circularly permuted 1,3-beta-glucanase.